The sequence spans 206 residues: D-ribitol-5-phosphate phosphatase (206 aa).

The Nucleophile role is filled by Asp-8. The Mg(2+) site is built by Asp-8 and Asp-172.

Belongs to the HAD-like hydrolase superfamily. Requires Mg(2+) as cofactor.

It catalyses the reaction D-ribitol 1-phosphate + H2O = ribitol + phosphate. It carries out the reaction D-ribitol 5-phosphate + H2O = ribitol + phosphate. The catalysed reaction is 5-amino-6-(5-phospho-D-ribitylamino)uracil + H2O = 5-amino-6-(D-ribitylamino)uracil + phosphate. It participates in cofactor biosynthesis; riboflavin biosynthesis; 5-amino-6-(D-ribitylamino)uracil from GTP: step 4/4. In terms of biological role, catalyzes the dephosphorylation of D-ribitol-5-phosphate and D-ribitol-1-phosphate. Is also able to dephosphorylate 5-amino-6-(5-phospho-D-ribitylamino)uracil, and thus could be involved in the riboflavin biosynthesis pathway. The protein is D-ribitol-5-phosphate phosphatase of Bacteroides thetaiotaomicron (strain ATCC 29148 / DSM 2079 / JCM 5827 / CCUG 10774 / NCTC 10582 / VPI-5482 / E50).